A 366-amino-acid chain; its full sequence is Glucan organizing enzyme 1 (366 aa).

Topologically, residues 1-24 (MLPLWARGGKPIVIPLPQKRHITL) are extracellular. A helical transmembrane segment spans residues 25-45 (PALPILLLLLGTGFLLHSLFF). Residues 46-366 (PPPPPHPPGK…ETYKKWKRGH (321 aa)) lie on the Cytoplasmic side of the membrane.

It belongs to the glycosyltransferase 32 family.

Its subcellular location is the cell membrane. In terms of biological role, plays a role in the localization of glycogen rosettes to the plasma membrane. Required for correct cell wall organization and may facilitate the connection between beta-1,3-glucan and beta-1,6-glucan in the cell wall. The chain is Glucan organizing enzyme 1 from Cryptococcus neoformans var. grubii serotype A (strain H99 / ATCC 208821 / CBS 10515 / FGSC 9487) (Filobasidiella neoformans var. grubii).